A 348-amino-acid polypeptide reads, in one-letter code: Chaperone protein DnaJ (348 aa).

The J domain maps to 3-65; the sequence is DLYGILGVDH…EQRQRYDRHV (63 aa). A CR-type zinc finger spans residues 109–191; sequence GGSQVVKIDS…CYGNGSRSAP (83 aa). Zn(2+)-binding residues include Cys122, Cys125, Cys139, Cys142, Cys165, Cys168, Cys179, and Cys182. 4 CXXCXGXG motif repeats span residues 122–129, 139–146, 165–172, and 179–186; these read CDVCNGTR, CFDCNGSG, CSKCRGNG, and CRRCYGNG.

This sequence belongs to the DnaJ family. In terms of assembly, homodimer. Zn(2+) is required as a cofactor.

The protein resides in the cytoplasm. Its function is as follows. Participates actively in the response to hyperosmotic and heat shock by preventing the aggregation of stress-denatured proteins and by disaggregating proteins, also in an autonomous, DnaK-independent fashion. Unfolded proteins bind initially to DnaJ; upon interaction with the DnaJ-bound protein, DnaK hydrolyzes its bound ATP, resulting in the formation of a stable complex. GrpE releases ADP from DnaK; ATP binding to DnaK triggers the release of the substrate protein, thus completing the reaction cycle. Several rounds of ATP-dependent interactions between DnaJ, DnaK and GrpE are required for fully efficient folding. Also involved, together with DnaK and GrpE, in the DNA replication of plasmids through activation of initiation proteins. The chain is Chaperone protein DnaJ from Tropheryma whipplei (strain Twist) (Whipple's bacillus).